The following is a 782-amino-acid chain: Phosphate transporter PHO1 (782 aa).

Over 1-386 (MVKFSKELEA…HQTKDSHMVT (386 aa)) the chain is Cytoplasmic. The region spanning 2–334 (VKFSKELEAQ…GQNASSTYLK (333 aa)) is the SPX domain. Residues 165 to 202 (KKRNLSGSNSHRSFSSSVRNSDFSAGSPGELSEIQSET) form a disordered region. A compositionally biased stretch (low complexity) spans 170-188 (SGSNSHRSFSSSVRNSDFS). The segment at 315–322 (KIMKKFDK) is important for inositol polyphosphate binding. Residues 387 to 407 (FFVGLFTGCFISLFVIYIILA) traverse the membrane as a helical segment. Residues 408–423 (HLSGIFTSSDQVSYLE) lie on the Lumenal side of the membrane. The chain crosses the membrane as a helical span at residues 424 to 444 (TVYPVFSVFALLSLHMFMYGC). Topologically, residues 445–473 (NLYMWKNTRINYTFIFEFAPNTALRYRDA) are cytoplasmic. The chain crosses the membrane as a helical span at residues 474–494 (FLMGTTFMTSVVAAMVIHLIL). Over 495–506 (RASGFSASQVDT) the chain is Lumenal. A helical transmembrane segment spans residues 507–527 (IPGILLLIFICVLICPFNTFY). The Cytoplasmic segment spans residues 528–593 (RPTRFCFIRI…THEYNTCKNG (66 aa)). The EXS domain occupies 591 to 782 (KNGRYYREFA…LPFLDRDSDG (192 aa)). The helical transmembrane segment at 594-614 (RYYREFAYLISFLPYFWRAMQ) threads the bilayer. The Lumenal portion of the chain corresponds to 615–619 (CVRRW). The chain crosses the membrane as a helical span at residues 620-639 (WDESNPDHLINMGKYVSAMV). Topologically, residues 640-782 (AAGVRITYAR…LPFLDRDSDG (143 aa)) are cytoplasmic.

This sequence belongs to the SYG1 (TC 2.A.94) family. As to quaternary structure, interacts with PHO2. In terms of processing, PHO1 degradation is PHO2 dependent and involves multivesicular body-mediated vacuolar proteolysis. Predominantly in roots, but also weak expression in the lower part of the hypocotyl. In the stellar cells, including the pericycle and xylem parenchyma cells, but not in the cortical or epidermal cells. Expressed in guard cells.

Its subcellular location is the golgi apparatus membrane. The protein resides in the golgi apparatus. The protein localises to the trans-Golgi network membrane. It is found in the endoplasmic reticulum membrane. Inositol polyphosphate sensor that associates with transcription factors to regulate inorganic phosphate (Pi) starvation responses. Probably acts by binding inositol polyphosphate via its SPX domain. Acts as a Pi exporter, mediating efflux of Pi out of cells. Transfers Pi from the epidermal and cortical cells to the root xylem vessels. Involved in the transfer of Pi from roots to shoots. Involved in abscisic acid (ABA) induction of stomatal closure and ABA repression of stomatal opening. This Arabidopsis thaliana (Mouse-ear cress) protein is Phosphate transporter PHO1.